The sequence spans 331 residues: Zinc finger CW-type PWWP domain protein 2 homolog (331 aa).

A CW-type zinc finger spans residues 9–64 (EFVHRTWVQCENESCLKWRLLSPAAAAAVNPSEPWYCFMNTDPSYSSCSVSEEDFP). Zn(2+) contacts are provided by C18, C23, C45, and C56. One can recognise a PWWP domain in the interval 83 to 147 (LGSLVLVKLR…AAFVGHFSLT (65 aa)). A disordered region spans residues 264–295 (IQEPTAREDESQGEQLSQCSPESPTGSPFQSY). Over residues 276-293 (GEQLSQCSPESPTGSPFQ) the composition is skewed to polar residues.

Functionally, histone methylation reader which binds to non-methylated (H3K4me0), monomethylated (H3K4me1), dimethylated (H3K4me2) and trimethylated (H3K4me3) 'Lys-4' on histone H3. The order of binding preference is H3K4me3 &gt; H3K4me2 &gt; H3K4me1 &gt; H3K4me0. The polypeptide is Zinc finger CW-type PWWP domain protein 2 homolog (Zcwpw2) (Mus musculus (Mouse)).